A 489-amino-acid polypeptide reads, in one-letter code: Poly(A) RNA polymerase GLD2 (489 aa).

A disordered region spans residues 93-118 (RQRFSCPSPHNQSARNSNFTSQPVTR). Over residues 100-116 (SPHNQSARNSNFTSQPV) the composition is skewed to polar residues. Positions 219 and 221 each coordinate Mg(2+). The PAP-associated domain occupies 386-440 (SLGDLFLGFLRYYATVFKWDKQVISVRMARTLPKSNCKEWKDKFICVEEPFNRTN).

It belongs to the DNA polymerase type-B-like family. GLD2 subfamily. Mg(2+) serves as cofactor. Mn(2+) is required as a cofactor.

It localises to the cytoplasm. The enzyme catalyses RNA(n) + ATP = RNA(n)-3'-adenine ribonucleotide + diphosphate. Functionally, cytoplasmic poly(A) RNA polymerase that adds successive AMP monomers to the 3'-end of specific RNAs, forming a poly(A) tail. In contrast to the canonical nuclear poly(A) RNA polymerase, it only adds poly(A) to selected cytoplasmic mRNAs. May not play a role in replication-dependent histone mRNA degradation. In Danio rerio (Zebrafish), this protein is Poly(A) RNA polymerase GLD2.